Consider the following 468-residue polypeptide: ATP synthase subunit beta (468 aa).

148-155 (GGAGVGKT) serves as a coordination point for ATP.

It belongs to the ATPase alpha/beta chains family. As to quaternary structure, F-type ATPases have 2 components, CF(1) - the catalytic core - and CF(0) - the membrane proton channel. CF(1) has five subunits: alpha(3), beta(3), gamma(1), delta(1), epsilon(1). CF(0) has three main subunits: a(1), b(2) and c(9-12). The alpha and beta chains form an alternating ring which encloses part of the gamma chain. CF(1) is attached to CF(0) by a central stalk formed by the gamma and epsilon chains, while a peripheral stalk is formed by the delta and b chains.

The protein resides in the cell inner membrane. It carries out the reaction ATP + H2O + 4 H(+)(in) = ADP + phosphate + 5 H(+)(out). Its function is as follows. Produces ATP from ADP in the presence of a proton gradient across the membrane. The catalytic sites are hosted primarily by the beta subunits. The polypeptide is ATP synthase subunit beta (Xanthomonas oryzae pv. oryzae (strain KACC10331 / KXO85)).